Reading from the N-terminus, the 200-residue chain is MEQLPSNLQVLLQAAEYVERREREAEHGYASILPCDPATPGRRKRQRTNSNPDNVRSVHNELEKHRRAQLRRCLEQLKQQVPLSMENSRHTTLSLLHRAKQHIKKLEDQELRAKSLKEKLRADQQKLRQRLKRLLPPNTERIRTDSLDSSNLSSERSDSDQEDLEVDVEGIILSGNEGELFVSFSAGLEHSYSTPAHAWL.

Disordered stretches follow at residues 31–56 (SILPCDPATPGRRKRQRTNSNPDNVR) and 133–164 (RLLPPNTERIRTDSLDSSNLSSERSDSDQEDL). The bHLH domain maps to 54–106 (NVRSVHNELEKHRRAQLRRCLEQLKQQVPLSMENSRHTTLSLLHRAKQHIKKL).

As to quaternary structure, efficient DNA binding requires dimerization with another bHLH protein. Binds DNA as a heterodimer with MAX. As to expression, expressed broadly throughout the CNS and the eye, starting at neurula stages.

Its subcellular location is the nucleus. In terms of biological role, transcriptional repressor. Binds with MAX to form a sequence-specific DNA-binding protein complex which recognizes the core sequence 5'-CAC[GA]TG-3'. This is Max dimerization protein 3 (mxd3) from Xenopus laevis (African clawed frog).